Here is a 204-residue protein sequence, read N- to C-terminus: Pantothenate transporter PanT (204 aa).

6 helical membrane passes run 18–38 (IILLQVLIPWLGYIPLGAVIV), 39–59 (GAQPTIIQFTVAIAAILLGAR), 63–83 (FIGGFWGLLTLWQAWSTPGSI), 86–106 (LMFQNPFTAFIPRILVGLIIG), 123–143 (LGLGFLGGLAALINTVGVVLL), and 176–196 (IFEIITGIILVAAIGNVLVPI).

In terms of assembly, in E.coli forms a stable energy-coupling factor (ECF) transporter complex probably composed of a membrane-embedded substrate-binding protein (S component), two ATP-binding proteins (A components) and a transmembrane protein (T component).

It localises to the cell membrane. Probable pantothenate-binding protein that interacts with the energy-coupling factor (ECF) ABC-transporter complex. Unlike classic ABC transporters this ECF transporter provides the energy necessary to transport a number of different substrates. The substrates themselves are bound by transmembrane, not extracytoplasmic soluble proteins and transport it into cells. Upon coexpression with its energy-coupling factor (ECF) ABC-transporter complex EcfA1A2T in E.coli allows pantothenate uptake; uptake requires both PanT and EcfA1A2T. The protein is Pantothenate transporter PanT (panT) of Leuconostoc mesenteroides subsp. mesenteroides (strain ATCC 8293 / DSM 20343 / BCRC 11652 / CCM 1803 / JCM 6124 / NCDO 523 / NBRC 100496 / NCIMB 8023 / NCTC 12954 / NRRL B-1118 / 37Y).